The chain runs to 302 residues: Phosphoribosylaminoimidazole-succinocarboxamide synthase (302 aa).

This sequence belongs to the SAICAR synthetase family.

The enzyme catalyses 5-amino-1-(5-phospho-D-ribosyl)imidazole-4-carboxylate + L-aspartate + ATP = (2S)-2-[5-amino-1-(5-phospho-beta-D-ribosyl)imidazole-4-carboxamido]succinate + ADP + phosphate + 2 H(+). It functions in the pathway purine metabolism; IMP biosynthesis via de novo pathway; 5-amino-1-(5-phospho-D-ribosyl)imidazole-4-carboxamide from 5-amino-1-(5-phospho-D-ribosyl)imidazole-4-carboxylate: step 1/2. The sequence is that of Phosphoribosylaminoimidazole-succinocarboxamide synthase from Polaromonas sp. (strain JS666 / ATCC BAA-500).